The chain runs to 244 residues: Agamous-like MADS-box protein AGL13 (244 aa).

Positions 3-57 (RGKVEVKRIENKITRQVTFSKRKSGLLKKAYELSVLCDAEVSLIIFSTGGKLYEF) constitute an MADS-box domain. Residues 85–175 (TQGLRQEVTK…KLETEDHDFK (91 aa)) enclose the K-box domain.

The protein resides in the nucleus. In terms of biological role, probable transcription factor. This Arabidopsis thaliana (Mouse-ear cress) protein is Agamous-like MADS-box protein AGL13 (AGL13).